Here is a 352-residue protein sequence, read N- to C-terminus: MVFRIASSPYTHNQRQTSRIMLLVLLAAVPGIAAQLWFFGWGTLVQILLASVSALLAEALVLKLRKQSVAATLKDNSALLTGLLLAVSIPPLAPWWMVVLGTVFAVIIAKQLYGGLGQNPFNPAMIGYVVLLISFPVQMTSWLPPHEIAVNIPGFIDTIQVIFSGHTASGGDMNTLRLGIDGISQATPLDTFKTSVRAGHSVEEIMQYPIYSGILAGAGWQWVNLAWLAGGVWLLWQKAIRWHIPLSFLVTLALCATLGWLFSPDTLAAPQIHLLSGATMLGAFFILTDPVTASTTNRGRLIFGALAGLLVWLIRSFGGYPDGVAFAVLLANITVPLIDYYTRPRVYGHRKG.

Helical transmembrane passes span 20-40 (IMLL…WFFG), 42-62 (GTLV…ALVL), 89-109 (IPPL…VIIA), and 123-143 (PAMI…TSWL). At T187 the chain carries FMN phosphoryl threonine. A run of 5 helical transmembrane segments spans residues 214–234 (ILAG…GVWL), 242–262 (WHIP…GWLF), 267–287 (LAAP…FFIL), 301–321 (LIFG…GGYP), and 322–342 (DGVA…DYYT).

The protein belongs to the NqrB/RnfD family. As to quaternary structure, the complex is composed of six subunits: RsxA, RsxB, RsxC, RsxD, RsxE and RsxG. FMN is required as a cofactor.

Its subcellular location is the cell inner membrane. In terms of biological role, part of a membrane-bound complex that couples electron transfer with translocation of ions across the membrane. Required to maintain the reduced state of SoxR. This chain is Ion-translocating oxidoreductase complex subunit D, found in Escherichia coli O127:H6 (strain E2348/69 / EPEC).